Here is a 103-residue protein sequence, read N- to C-terminus: RNA-binding protein YlxQ (103 aa).

The protein belongs to the eukaryotic ribosomal protein eL8 family.

Its function is as follows. RNA-binding protein that recognizes the K-turn motif present in ribosomal RNA, but also in box C/D and box C'/D' sRNAs. The chain is RNA-binding protein YlxQ from Enterococcus faecium (Streptococcus faecium).